A 1839-amino-acid chain; its full sequence is Adenylate cyclase (1839 aa).

Disordered stretches follow at residues 1–21, 43–87, 126–245, 272–315, 332–388, and 400–468; these read MSSP…PQIE, ITTH…PRFS, TSLL…PIVS, KNTE…QWTA, KRKA…DSND, and ESSG…SFSK. Residues 165–211 show a composition bias toward polar residues; that stretch reads SQSNESRGTRSSIFFPSTSNSRRGSATSTMTSGSRSSHPPDTPPITS. A compositionally biased stretch (low complexity) spans 212 to 221; the sequence is QQQEQQYDQQ. Positions 222 to 233 are enriched in basic and acidic residues; that stretch reads RQQRPETREQEQ. Positions 332–355 are enriched in basic residues; that stretch reads KRKAKHHHHYHHPQHPRPPHRKHY. Positions 361 to 376 are enriched in basic and acidic residues; sequence PIEDKAVVEKEQEPPE. Positions 407–428 are enriched in low complexity; the sequence is SASTQSVSSFSSGATGASGATG. The region spanning 494 to 574 is the Ras-associating domain; that stretch reads RRYAIRIFNI…LNGYLKSDPL (81 aa). 22 LRR repeats span residues 632-655, 659-679, 681-702, 704-726, 727-748, 750-771, 773-794, 795-816, 817-834, 835-856, 858-879, 882-903, 905-926, 928-950, 951-971, 982-1004, 1006-1027, 1028-1048, 1051-1073, 1074-1096, 1103-1124, and 1135-1160; these read TSDI…FIES, LSSL…VTDA, KLVS…IFKL, NLTI…SKLK, NLQL…INSC, NLLQ…INQL, KLAK…SQMK, NLRT…APNL, QNLF…DDLT, RLRT…GNYM, NMTS…LLSK, RLEK…INKL, RLIY…ISDL, SLKS…EDLE, LTSL…PAKF, SLLF…VNTF, NLKT…KLQN, LTEL…AVQH, SLKV…SQLS, RLSV…HYDW, DLKY…LDPE, and LKQL…SVSI. A PPM-type phosphatase domain is found at 1173-1439; it reads RYGVADTLGQ…DNITILCVSL (267 aa). One can recognise a Guanylate cyclase domain in the interval 1483–1620; the sequence is AIVFTDIKNS…PVVNKAARVS (138 aa). Mg(2+) is bound by residues Asp1488 and Asp1531.

This sequence belongs to the adenylyl cyclase class-3 family. The cofactor is Mg(2+).

The catalysed reaction is ATP = 3',5'-cyclic AMP + diphosphate. Plays essential roles in regulation of cellular metabolism by catalyzing the synthesis of a second messenger, cAMP. In Lachancea kluyveri (Yeast), this protein is Adenylate cyclase (CYR1).